We begin with the raw amino-acid sequence, 100 residues long: Small ribosomal subunit protein uS14c (100 aa).

This sequence belongs to the universal ribosomal protein uS14 family. In terms of assembly, part of the 30S ribosomal subunit.

It localises to the plastid. The protein resides in the chloroplast. Functionally, binds 16S rRNA, required for the assembly of 30S particles. The protein is Small ribosomal subunit protein uS14c of Citrus sinensis (Sweet orange).